A 243-amino-acid polypeptide reads, in one-letter code: Small ribosomal subunit protein uS3 (243 aa).

In terms of domain architecture, KH type-2 spans 39–110; that stretch reads IRGFIQKKYA…QVRINVVEIE (72 aa). The disordered stretch occupies residues 215–243; it reads DQPLPVGASPRRKGSRRPQQFEDRSNDGK. The segment covering 233–243 has biased composition (basic and acidic residues); that stretch reads QQFEDRSNDGK.

The protein belongs to the universal ribosomal protein uS3 family. In terms of assembly, part of the 30S ribosomal subunit. Forms a tight complex with proteins S10 and S14.

Functionally, binds the lower part of the 30S subunit head. Binds mRNA in the 70S ribosome, positioning it for translation. This is Small ribosomal subunit protein uS3 from Prochlorococcus marinus (strain MIT 9211).